The chain runs to 44 residues: Cytochrome b559 subunit beta (44 aa).

A helical membrane pass occupies residues 19 to 35 (WLAVHTLAVPTVFFIGA). Heme is bound at residue His23.

The protein belongs to the PsbE/PsbF family. As to quaternary structure, heterodimer of an alpha subunit and a beta subunit. PSII is composed of 1 copy each of membrane proteins PsbA, PsbB, PsbC, PsbD, PsbE, PsbF, PsbH, PsbI, PsbJ, PsbK, PsbL, PsbM, PsbT, PsbX, PsbY, PsbZ, Psb30/Ycf12, peripheral proteins PsbO, CyanoQ (PsbQ), PsbU, PsbV and a large number of cofactors. It forms dimeric complexes. The cofactor is heme b.

The protein resides in the cellular thylakoid membrane. In terms of biological role, this b-type cytochrome is tightly associated with the reaction center of photosystem II (PSII). PSII is a light-driven water:plastoquinone oxidoreductase that uses light energy to abstract electrons from H(2)O, generating O(2) and a proton gradient subsequently used for ATP formation. It consists of a core antenna complex that captures photons, and an electron transfer chain that converts photonic excitation into a charge separation. This is Cytochrome b559 subunit beta from Gloeothece citriformis (strain PCC 7424) (Cyanothece sp. (strain PCC 7424)).